The sequence spans 346 residues: Isopentenyl-diphosphate delta-isomerase (346 aa).

A substrate-binding site is contributed by 9 to 10; it reads RK. FMN-binding positions include Ser67, 68 to 70, Ser98, and Asn127; that span reads SMT. 98 to 100 lines the substrate pocket; the sequence is SQR. Gln162 provides a ligand contact to substrate. Residue Glu163 coordinates Mg(2+). FMN-binding positions include Lys194, Thr224, 274–276, and 295–296; these read GIR and AA.

This sequence belongs to the IPP isomerase type 2 family. In terms of assembly, homooctamer. Dimer of tetramers. FMN is required as a cofactor. Requires NADPH as cofactor. It depends on Mg(2+) as a cofactor.

It is found in the cytoplasm. It catalyses the reaction isopentenyl diphosphate = dimethylallyl diphosphate. Functionally, involved in the biosynthesis of isoprenoids. Catalyzes the 1,3-allylic rearrangement of the homoallylic substrate isopentenyl (IPP) to its allylic isomer, dimethylallyl diphosphate (DMAPP). The protein is Isopentenyl-diphosphate delta-isomerase of Stutzerimonas stutzeri (strain A1501) (Pseudomonas stutzeri).